Here is a 201-residue protein sequence, read N- to C-terminus: Holliday junction branch migration complex subunit RuvA (201 aa).

Residues 1–64 (MYEYIRGQFQ…EDFIGLYGFT (64 aa)) form a domain I region. The interval 65-143 (TREELEMFKL…PDELTSEEGQ (79 aa)) is domain II. The segment at 144–152 (LIEGINDNS) is flexible linker. Positions 153 to 201 (DYSFNINETLSALMALGYTEKEAQKALEKVDKTLSIENMIKESLKLLMR) are domain III.

Belongs to the RuvA family. As to quaternary structure, homotetramer. Forms an RuvA(8)-RuvB(12)-Holliday junction (HJ) complex. HJ DNA is sandwiched between 2 RuvA tetramers; dsDNA enters through RuvA and exits via RuvB. An RuvB hexamer assembles on each DNA strand where it exits the tetramer. Each RuvB hexamer is contacted by two RuvA subunits (via domain III) on 2 adjacent RuvB subunits; this complex drives branch migration. In the full resolvosome a probable DNA-RuvA(4)-RuvB(12)-RuvC(2) complex forms which resolves the HJ.

Its subcellular location is the cytoplasm. Functionally, the RuvA-RuvB-RuvC complex processes Holliday junction (HJ) DNA during genetic recombination and DNA repair, while the RuvA-RuvB complex plays an important role in the rescue of blocked DNA replication forks via replication fork reversal (RFR). RuvA specifically binds to HJ cruciform DNA, conferring on it an open structure. The RuvB hexamer acts as an ATP-dependent pump, pulling dsDNA into and through the RuvAB complex. HJ branch migration allows RuvC to scan DNA until it finds its consensus sequence, where it cleaves and resolves the cruciform DNA. In Clostridium perfringens (strain 13 / Type A), this protein is Holliday junction branch migration complex subunit RuvA.